Reading from the N-terminus, the 593-residue chain is Proteasome-associated ATPase (593 aa).

Positions 23–95 form a coiled coil; sequence LLSQISYLEE…LKEEVDRLGQ (73 aa). Residue 282–287 participates in ATP binding; that stretch reads GCGKTL. The docks into pockets in the proteasome alpha-ring stretch occupies residues 592–593; the sequence is YL.

Belongs to the AAA ATPase family. In terms of assembly, homohexamer. Assembles into a hexameric ring structure that caps the 20S proteasome core. Strongly interacts with the prokaryotic ubiquitin-like protein Pup through a hydrophobic interface; the interacting region of ARC lies in its N-terminal coiled-coil domain. There is one Pup binding site per ARC hexamer ring. Upon ATP-binding, the C-terminus of ARC interacts with the alpha-rings of the proteasome core, possibly by binding to the intersubunit pockets.

The protein operates within protein degradation; proteasomal Pup-dependent pathway. Functionally, ATPase which is responsible for recognizing, binding, unfolding and translocation of pupylated proteins into the bacterial 20S proteasome core particle. May be essential for opening the gate of the 20S proteasome via an interaction with its C-terminus, thereby allowing substrate entry and access to the site of proteolysis. Thus, the C-termini of the proteasomal ATPase may function like a 'key in a lock' to induce gate opening and therefore regulate proteolysis. The polypeptide is Proteasome-associated ATPase (Geodermatophilus obscurus (strain ATCC 25078 / DSM 43160 / JCM 3152 / CCUG 61914 / KCC A-0152 / KCTC 9177 / NBRC 13315 / NRRL B-3577 / G-20)).